Here is a 277-residue protein sequence, read N- to C-terminus: 4-hydroxy-tetrahydrodipicolinate reductase (277 aa).

Residue 9–14 participates in NAD(+) binding; the sequence is GATGRM. An NADP(+)-binding site is contributed by Lys37. 75-77 contacts NAD(+); it reads GTS. The active-site Proton donor/acceptor is the His132. Lys136 serves as the catalytic Proton donor. 142–143 lines the (S)-2,3,4,5-tetrahydrodipicolinate pocket; sequence GT. The segment at 245-277 is disordered; that stretch reads SRERATQTAPTGAASGPVDDGGPSGQAATVTSA.

The protein belongs to the DapB family.

The protein localises to the cytoplasm. It catalyses the reaction (S)-2,3,4,5-tetrahydrodipicolinate + NAD(+) + H2O = (2S,4S)-4-hydroxy-2,3,4,5-tetrahydrodipicolinate + NADH + H(+). The enzyme catalyses (S)-2,3,4,5-tetrahydrodipicolinate + NADP(+) + H2O = (2S,4S)-4-hydroxy-2,3,4,5-tetrahydrodipicolinate + NADPH + H(+). The protein operates within amino-acid biosynthesis; L-lysine biosynthesis via DAP pathway; (S)-tetrahydrodipicolinate from L-aspartate: step 4/4. In terms of biological role, catalyzes the conversion of 4-hydroxy-tetrahydrodipicolinate (HTPA) to tetrahydrodipicolinate. The sequence is that of 4-hydroxy-tetrahydrodipicolinate reductase from Clavibacter sepedonicus (Clavibacter michiganensis subsp. sepedonicus).